A 1201-amino-acid polypeptide reads, in one-letter code: Vitamin B12-dependent ribonucleotide reductase (1201 aa).

Substrate is bound by residues serine 153, 198–199 (AC), glycine 230, 482–486 (NPCSE), and 683–687 (PTGTI). Cysteine 199 and cysteine 495 are oxidised to a cystine. Catalysis depends on asparagine 482, which acts as the Proton acceptor. The active-site Cysteine radical intermediate is cysteine 484. Glutamate 486 serves as the catalytic Proton acceptor. Positions 1100–1118 (DEIGSKRATAESNGQEKET) are enriched in basic and acidic residues. A disordered region spans residues 1100–1120 (DEIGSKRATAESNGQEKETLS).

Belongs to the ribonucleoside diphosphate reductase class-2 family. It depends on adenosylcob(III)alamin as a cofactor.

It catalyses the reaction a 2'-deoxyribonucleoside 5'-diphosphate + [thioredoxin]-disulfide + H2O = a ribonucleoside 5'-diphosphate + [thioredoxin]-dithiol. Its function is as follows. Catalyzes the reduction of ribonucleotides to deoxyribonucleotides. May function to provide a pool of deoxyribonucleotide precursors for DNA repair during oxygen limitation and/or for immediate growth after restoration of oxygen. This is Vitamin B12-dependent ribonucleotide reductase (nrdJ) from Leptospira interrogans serogroup Icterohaemorrhagiae serovar Lai (strain 56601).